We begin with the raw amino-acid sequence, 332 residues long: Ketol-acid reductoisomerase (NAD(+)) (332 aa).

The KARI N-terminal Rossmann domain occupies 1–181 (MKIYYDQDAD…GATRAGVIQT (181 aa)). Residues 24-27 (YGSQ), Ser-50, and 82-85 (DEKQ) each bind NAD(+). His-107 is an active-site residue. Gly-133 is an NAD(+) binding site. Residues 182 to 327 (TFKEETETDL…ARLRGMMPWL (146 aa)) enclose the KARI C-terminal knotted domain. Mg(2+) contacts are provided by Asp-190, Glu-194, Glu-226, and Glu-230. Substrate is bound at residue Ser-251.

Belongs to the ketol-acid reductoisomerase family. Mg(2+) is required as a cofactor.

It carries out the reaction (2R)-2,3-dihydroxy-3-methylbutanoate + NAD(+) = (2S)-2-acetolactate + NADH + H(+). It participates in amino-acid biosynthesis; L-isoleucine biosynthesis; L-isoleucine from 2-oxobutanoate: step 2/4. It functions in the pathway amino-acid biosynthesis; L-valine biosynthesis; L-valine from pyruvate: step 2/4. Involved in the biosynthesis of branched-chain amino acids (BCAA). Catalyzes an alkyl-migration followed by a ketol-acid reduction of (S)-2-acetolactate (S2AL) to yield (R)-2,3-dihydroxy-isovalerate. In the isomerase reaction, S2AL is rearranged via a Mg-dependent methyl migration to produce 3-hydroxy-3-methyl-2-ketobutyrate (HMKB). In the reductase reaction, this 2-ketoacid undergoes a metal-dependent reduction by NADH to yield (R)-2,3-dihydroxy-isovalerate. In Thermacetogenium phaeum (strain ATCC BAA-254 / DSM 26808 / PB), this protein is Ketol-acid reductoisomerase (NAD(+)).